An 844-amino-acid polypeptide reads, in one-letter code: Penicillin-binding protein 1B (844 aa).

The span at 1–10 (MAGNDREPIG) shows a compositional bias: basic and acidic residues. Positions 1 to 60 (MAGNDREPIGRKGKPTRPVKQKVSRRRYEDDDDYDDYDDYEDEEPMPRKGKGKGKGRKPR) are disordered. Residues 1–63 (MAGNDREPIG…GKGRKPRGKR (63 aa)) are Cytoplasmic-facing. Positions 11–25 (RKGKPTRPVKQKVSR) are enriched in basic residues. Residues 30 to 44 (DDDDYDDYDDYEDEE) show a composition bias toward acidic residues. Over residues 48–60 (RKGKGKGKGRKPR) the composition is skewed to basic residues. The helical; Signal-anchor for type II membrane protein transmembrane segment at 64-87 (GWLWLLLKLAIVFAVLIAIYGVYL) threads the bilayer. The membrane association stretch occupies residues 88 to 250 (DQKIRSRIDG…DGISLYSIGR (163 aa)). Over 88–844 (DQKIRSRIDG…GWIKDMFGSN (757 aa)) the chain is Periplasmic. The interval 109–200 (RMVNLEPDMT…QFGFFRLDPR (92 aa)) is uvrB domain 2 homolog. The segment at 195 to 367 (FRLDPRLITM…SIYNPWRNPK (173 aa)) is transglycosylase. Glu-233 acts as the Proton donor; for transglycosylase activity in catalysis. The interval 444–736 (SVAQDAAEKA…NNQPTKLYGA (293 aa)) is transpeptidase. Ser-510 (acyl-ester intermediate; for transpeptidase activity) is an active-site residue. Low complexity predominate over residues 793-825 (LCQQSEMQQQPSGNPFDQSSQPQQQPQQQPAQQ). A disordered region spans residues 793 to 835 (LCQQSEMQQQPSGNPFDQSSQPQQQPQQQPAQQEQKDSDGVAG).

It in the N-terminal section; belongs to the glycosyltransferase 51 family. The protein in the C-terminal section; belongs to the transpeptidase family. In terms of assembly, forms a trimeric complex with MipA and MltA. Has also been shown to exist as monomer or homodimer; homodimer of Alpha and Gamma isozymes can be found. Interacts with UvrA, FtsL and FtsN.

The protein resides in the cell inner membrane. It carries out the reaction [GlcNAc-(1-&gt;4)-Mur2Ac(oyl-L-Ala-gamma-D-Glu-L-Lys-D-Ala-D-Ala)](n)-di-trans,octa-cis-undecaprenyl diphosphate + beta-D-GlcNAc-(1-&gt;4)-Mur2Ac(oyl-L-Ala-gamma-D-Glu-L-Lys-D-Ala-D-Ala)-di-trans,octa-cis-undecaprenyl diphosphate = [GlcNAc-(1-&gt;4)-Mur2Ac(oyl-L-Ala-gamma-D-Glu-L-Lys-D-Ala-D-Ala)](n+1)-di-trans,octa-cis-undecaprenyl diphosphate + di-trans,octa-cis-undecaprenyl diphosphate + H(+). The enzyme catalyses Preferential cleavage: (Ac)2-L-Lys-D-Ala-|-D-Ala. Also transpeptidation of peptidyl-alanyl moieties that are N-acyl substituents of D-alanine.. The protein operates within cell wall biogenesis; peptidoglycan biosynthesis. In terms of biological role, cell wall formation. Synthesis of cross-linked peptidoglycan from the lipid intermediates. The enzyme has a penicillin-insensitive transglycosylase N-terminal domain (formation of linear glycan strands) and a penicillin-sensitive transpeptidase C-terminal domain (cross-linking of the peptide subunits). This is Penicillin-binding protein 1B (mrcB) from Escherichia coli (strain K12).